The primary structure comprises 90 residues: Protein RL8A (90 aa).

A helical membrane pass occupies residues 15–34 (WTCEGLLLLLGLLVLFFHHH). The tract at residues 55-90 (HESGWYSSDDDGDRDGDEETGESHNRNSVGLSAVFS) is disordered. Over residues 62 to 74 (SDDDGDRDGDEET) the composition is skewed to acidic residues. The span at 80-90 (RNSVGLSAVFS) shows a compositional bias: polar residues.

It is found in the host membrane. In Homo sapiens (Human), this protein is Protein RL8A (RL8A).